A 224-amino-acid chain; its full sequence is Putative adhesin RMA_1308 (224 aa).

The signal sequence occupies residues 1–22; it reads MQKLLLIAATSATILSSSLSFA.

This chain is Putative adhesin RMA_1308, found in Rickettsia massiliae (strain Mtu5).